The chain runs to 447 residues: Acyl-lipid (7-3)-desaturase (447 aa).

In terms of domain architecture, Cytochrome b5 heme-binding spans 36 to 94 (LTIVGDSVYDAKAFRSEHPGGAHFVSLFGGRDATEAFMEYHRRAWPKSRMSRFHVGSLA). Residues His-53 and His-76 each contribute to the heme site. Transmembrane regions (helical) follow at residues 123–143 (GFAP…AIAL), 154–174 (LLPS…IQHD), and 185–205 (SVNL…ILWL). A Histidine box-1 motif is present at residues 173–177 (HDANH). The Histidine box-2 signature appears at 208–213 (HVVMHH). 3 helical membrane passes run 244–264 (WLQH…LLFL), 286–306 (LFMP…ALPL), and 315–335 (AVCI…FFFI). A Histidine box-3 motif is present at residues 386-390 (QIEHH).

It belongs to the fatty acid desaturase type 1 family. Fe(2+) serves as cofactor.

Its subcellular location is the membrane. It catalyses the reaction a (7Z,10Z,13Z,16Z,19Z)-docosapentaenoyl-containing glycerolipid + 2 Fe(II)-[cytochrome b5] + O2 + 2 H(+) = a (4Z,7Z,10Z,13Z,16Z,19Z)-docosahexaenoyl-containing glycerolipid + 2 Fe(III)-[cytochrome b5] + 2 H2O. The catalysed reaction is a (7Z,10Z,13Z,16Z)-docosatetraenoyl-containing glycerolipid + 2 Fe(II)-[cytochrome b5] + O2 + 2 H(+) = a (4Z,7Z,10Z,13Z,16Z)-docosapentaenoyl-containing glycerolipid + 2 Fe(III)-[cytochrome b5] + 2 H2O. Functionally, fatty acid desaturase that introduces a cis double bond at the 4-position in 22-carbon polyunsaturated fatty acids that contain a Delta(7) double bond, resulting in the production of delta-4 desaturated fatty acid docosahexanoic acid (DHA). This chain is Acyl-lipid (7-3)-desaturase, found in Rebecca salina (Marine microalga).